We begin with the raw amino-acid sequence, 66 residues long: MSQPLTVDCPTCGAPVEWDAKNAFRPFCSDRCKLIDLGAWAAEEHKIAGSQESEDELYSGDLEPRH.

Zn(2+) is bound by residues C9, C12, C28, and C32. The segment at 45-66 is disordered; sequence HKIAGSQESEDELYSGDLEPRH.

The protein belongs to the DNA gyrase inhibitor YacG family. Interacts with GyrB. Requires Zn(2+) as cofactor.

Its function is as follows. Inhibits all the catalytic activities of DNA gyrase by preventing its interaction with DNA. Acts by binding directly to the C-terminal domain of GyrB, which probably disrupts DNA binding by the gyrase. This is DNA gyrase inhibitor YacG from Pseudomonas putida (strain W619).